We begin with the raw amino-acid sequence, 419 residues long: Dual specificity protein phosphatase 7 (419 aa).

A disordered region spans residues 1–41 (MKNQLRGPPVRAHMSTSGAAAAGGTRAGSEPGAGSGSSAGI). Over residues 15–30 (STSGAAAAGGTRAGSE) the composition is skewed to low complexity. The span at 31–41 (PGAGSGSSAGI) shows a compositional bias: gly residues. Residues 68–187 (GGASLLLLDC…FQTEYSEHCE (120 aa)) enclose the Rhodanese domain. The interval 216–240 (CSDGESDRELPSSATESDGSPVPSS) is disordered. The segment covering 227 to 240 (SSATESDGSPVPSS) has biased composition (polar residues). The region spanning 244-387 (FPVQILPYLY…LLDFERTLGL (144 aa)) is the Tyrosine-protein phosphatase domain. The active-site Phosphocysteine intermediate is the C331. Residue 331-337 (CLAGISR) participates in substrate binding.

The protein belongs to the protein-tyrosine phosphatase family. Non-receptor class dual specificity subfamily. In terms of assembly, interacts with MAPK1/ERK2; the interaction enhances DUSP7 phosphatase activity.

Its subcellular location is the cytoplasm. The catalysed reaction is O-phospho-L-tyrosyl-[protein] + H2O = L-tyrosyl-[protein] + phosphate. It catalyses the reaction O-phospho-L-seryl-[protein] + H2O = L-seryl-[protein] + phosphate. It carries out the reaction O-phospho-L-threonyl-[protein] + H2O = L-threonyl-[protein] + phosphate. Its activity is regulated as follows. Strongly inhibited by sodium orthovanadate. In terms of biological role, dual specificity protein phosphatase. Shows high activity towards MAPK1/ERK2. Also has lower activity towards MAPK14 and MAPK8. In arrested oocytes, plays a role in meiotic resumption. Promotes nuclear envelope breakdown and activation of the CDK1/Cyclin-B complex in oocytes, probably by dephosphorylating and inactivating the conventional protein kinase C (cPKC) isozyme PRKCB. May also inactivate PRKCA and/or PRKCG. Also important in oocytes for normal chromosome alignment on the metaphase plate and progression to anaphase, where it might regulate activity of the spindle-assembly checkpoint (SAC) complex. The chain is Dual specificity protein phosphatase 7 from Rattus norvegicus (Rat).